Consider the following 1224-residue polypeptide: MAQSRRHPHGRASSAGPRMSTEASSKPLKVGSRVEVIGKGHRGTVAYVGATLXATGKWVGVILDEAKGKNDGTVQGRKYFTCEENHGIFVRQSQIQVFEDGADTTSPETPESAALKVPKRHSRXAAKGSKLRGAKPKKTTARRPKPTRTPTSAPSSGTAGPSGSASASGGEMSSSEPSTPAQTPLVAPVIPSPSLTSPVAPMVPSPTKEEENLRSQVRDLEEKLETLKIKRNEDKAKLKELEKYKIQLEQVQEWKSKMQEQQADLQRRLKEAKKEAKDALEAKERYMEEMADTADAIEMATLDKEMAEERAESLQQEVDSLKEKVEYLTMDLEILKHEIEEKGSDGAASSYQVKQLEEQNARLKEALVRMRDLSASEKQEHVKLQKQMEKKNTELESLRQQREKLQEEVKQAEKTVDELKEQVDAALGAEEMVETLTERNLDLEEKVRELRETVGDLEAMNEMNDELQENARETELELREQLDLAAARVREAEKRVEAAQETVADYQQTIKKYRELTAHLQDVNRELMSQQEASAEKQQQPPPEIFDFKIKFAETKAHAKAIEMELRQMEVQQANRHVSLLTSFMPDSFLRHGGDHDCILVLLLIPRLICKADVISKQAQEKFELNENCTARAGLRGAAGEQLSFAAGLVYSLSLLQATLHKYEQALNKCSVEVYKKVGMLYPEMSVHERSLDFLIELLHKDQLDETVNVEPLTKAIKYYQHLYSIHLAEQAEDCTMQLADHIKFTQSALDCMGVEVCRLRAFLQAGQEASDLAILLKDLETSCSDIRQFCKKIRRRMPGTDAPGIPAALGFGQQVSDTLLDCRKHLTWVVAVLQEVAAAGAQLIAPLAENGAAGGEAGGLGLQSQRADLQRSGHQPLRVPAPVLQHPHCHHEQDATAMQEGEYDADRPQSKPTPPAELRAAALRAEITDAEGLGLKLEDRETVIKELKKSLKIKGEELSEANVRLSLLEKKLDSASKDADDRVEKIQTKLDETQTLLKKKEKEFEETMDALQADIDQLESEKVELKQRLNNQSKRTIEGLRGAPASGVASIVSGIAGEEQQRGVGAGQAAGGSAGPVQVKDSPLLLQQIEALQLSIRHLKNENNRLKGAQMKLELAGLKPLQVAKVSLPQSKQGEGPATLTLYRKSTQLLETLYQMSTNAKVVDTKQTKSGRSGARLLEQTARLWAMKGSIEALRTRPCGRWCSSSRARASPPASACSPPRPS.

A compositionally biased stretch (basic residues) spans 1 to 10 (MAQSRRHPHG). Positions 1 to 30 (MAQSRRHPHGRASSAGPRMSTEASSKPLKV) are disordered. Residues 49–91 (GATLXATGKWVGVILDEAKGKNDGTVQGRKYFTCEENHGIFVR) form the CAP-Gly domain. Disordered stretches follow at residues 100–217 (DGAD…RSQV), 374–402 (SASE…RQQR), and 888–918 (PHCH…PPAE). The span at 117–146 (VPKRHSRXAAKGSKLRGAKPKKTTARRPKP) shows a compositional bias: basic residues. The span at 148–180 (RTPTSAPSSGTAGPSGSASASGGEMSSSEPSTP) shows a compositional bias: low complexity. Residues 205–540 (SPTKEEENLR…QEASAEKQQQ (336 aa)) adopt a coiled-coil conformation. The span at 207-217 (TKEEENLRSQV) shows a compositional bias: basic and acidic residues. Coiled-coil stretches lie at residues 936–1042 (LKLE…EGLR) and 1081–1117 (KDSP…LELA). A disordered region spans residues 1203 to 1224 (WCSSSRARASPPASACSPPRPS). Residues 1204–1224 (CSSSRARASPPASACSPPRPS) show a composition bias toward low complexity.

The protein belongs to the dynactin 150 kDa subunit family. Monomer and homodimer. Subunit of dynactin, a multiprotein complex part of a tripartite complex with dynein and a adapter, such as BICDL1, BICD2 or HOOK3. The dynactin complex is built around ACTR1A/ACTB filament and consists of an actin-related filament composed of a shoulder domain, a pointed end and a barbed end. Its length is defined by its flexible shoulder domain. The soulder is composed of 2 DCTN1 subunits, 4 DCTN2 and 2 DCTN3. DCTN1/p150(glued) binds directly to microtubules and to cytoplasmic dynein. In terms of tissue distribution, ubiquitously expressed.

The protein resides in the cytoplasm. Its subcellular location is the cytoskeleton. It localises to the microtubule organizing center. It is found in the centrosome. The protein localises to the centriole. The protein resides in the spindle. Its subcellular location is the cell cortex. Its function is as follows. Part of the dynactin complex that activates the molecular motor dynein for ultra-processive transport along microtubules. Plays a key role in dynein-mediated retrograde transport of vesicles and organelles along microtubules by recruiting and tethering dynein to microtubules. Binds to both dynein and microtubules providing a link between specific cargos, microtubules and dynein. Essential for targeting dynein to microtubule plus ends, recruiting dynein to membranous cargos and enhancing dynein processivity (the ability to move along a microtubule for a long distance without falling off the track). Can also act as a brake to slow the dynein motor during motility along the microtubule. Can regulate microtubule stability by promoting microtubule formation, nucleation and polymerization and by inhibiting microtubule catastrophe in neurons. Inhibits microtubule catastrophe by binding both to microtubules and to tubulin, leading to enhanced microtubule stability along the axon. Plays a role in metaphase spindle orientation. Plays a role in centriole cohesion and subdistal appendage organization and function. Its recruitment to the centriole in a KIF3A-dependent manner is essential for the maintenance of centriole cohesion and the formation of subdistal appendage. Also required for microtubule anchoring at the mother centriole. Plays a role in primary cilia formation. The sequence is that of Dynactin subunit 1 (DCTN1) from Gallus gallus (Chicken).